The chain runs to 206 residues: Peptidyl-tRNA hydrolase (206 aa).

Y14 is a tRNA binding site. The active-site Proton acceptor is H19. 3 residues coordinate tRNA: Y64, N66, and N112.

Belongs to the PTH family. In terms of assembly, monomer.

It localises to the cytoplasm. The enzyme catalyses an N-acyl-L-alpha-aminoacyl-tRNA + H2O = an N-acyl-L-amino acid + a tRNA + H(+). Hydrolyzes ribosome-free peptidyl-tRNAs (with 1 or more amino acids incorporated), which drop off the ribosome during protein synthesis, or as a result of ribosome stalling. In terms of biological role, catalyzes the release of premature peptidyl moieties from peptidyl-tRNA molecules trapped in stalled 50S ribosomal subunits, and thus maintains levels of free tRNAs and 50S ribosomes. The chain is Peptidyl-tRNA hydrolase from Rhodopseudomonas palustris (strain ATCC BAA-98 / CGA009).